Reading from the N-terminus, the 451-residue chain is Chromosomal replication initiator protein DnaA (451 aa).

Positions 1-71 (MSEQEIWKKV…QTIMKDVIGY (71 aa)) are domain I, interacts with DnaA modulators. Residues 71–112 (YEVEPKFFTAEQLAELDETSRKSNTPSEPQRQIIEYGHEGTD) form a domain II region. The tract at residues 113–329 (QFNTHNTFDT…GALTRLLAYS (217 aa)) is domain III, AAA+ region. Residues Gly157, Gly159, Lys160, and Thr161 each coordinate ATP. The domain IV, binds dsDNA stretch occupies residues 330 to 451 (KLQGRPITTE…EDLEKEIRNQ (122 aa)).

Belongs to the DnaA family. Oligomerizes as a right-handed, spiral filament on DNA at oriC.

Its subcellular location is the cytoplasm. Functionally, plays an essential role in the initiation and regulation of chromosomal replication. ATP-DnaA binds to the origin of replication (oriC) to initiate formation of the DNA replication initiation complex once per cell cycle. Binds the DnaA box (a 9 base pair repeat at the origin) and separates the double-stranded (ds)DNA. Forms a right-handed helical filament on oriC DNA; dsDNA binds to the exterior of the filament while single-stranded (ss)DNA is stabiized in the filament's interior. The ATP-DnaA-oriC complex binds and stabilizes one strand of the AT-rich DNA unwinding element (DUE), permitting loading of DNA polymerase. After initiation quickly degrades to an ADP-DnaA complex that is not apt for DNA replication. Binds acidic phospholipids. In Staphylococcus haemolyticus (strain JCSC1435), this protein is Chromosomal replication initiator protein DnaA.